The following is a 342-amino-acid chain: Galactose mutarotase (342 aa).

The residue at position 2 (Ala-2) is an N-acetylalanine. The residue at position 14 (Ser-14) is a Phosphoserine. Beta-D-galactose contacts are provided by residues 81 to 82 and His-107; that span reads NR. Ser-124 carries the post-translational modification Phosphoserine. Residue His-176 is the Proton donor of the active site. Beta-D-galactose contacts are provided by residues 176–178, Asp-243, Gln-279, and Glu-307; that span reads HSY. Glu-307 functions as the Proton acceptor in the catalytic mechanism.

It belongs to the aldose epimerase family. In terms of assembly, monomer.

The protein resides in the cytoplasm. The catalysed reaction is alpha-D-galactose = beta-D-galactose. It catalyses the reaction alpha-D-glucose = beta-D-glucose. The protein operates within carbohydrate metabolism; hexose metabolism. It participates in carbohydrate metabolism; galactose metabolism. Functionally, mutarotase that catalyzes the interconversion of beta-D-galactose and alpha-D-galactose during galactose metabolism. Beta-D-galactose is metabolized in the liver into glucose 1-phosphate, the primary metabolic fuel, by the action of four enzymes that constitute the Leloir pathway: GALM, GALK1 (galactokinase), GALT (galactose-1-phosphate uridylyltransferase) and GALE (UDP-galactose-4'-epimerase). Involved in the maintenance of the equilibrium between the beta- and alpha-anomers of galactose, therefore ensuring a sufficient supply of the alpha-anomer for GALK1. Also active on D-glucose although shows a preference for galactose over glucose. This is Galactose mutarotase from Homo sapiens (Human).